We begin with the raw amino-acid sequence, 622 residues long: Serine/threonine-protein kinase PknB (622 aa).

At 1–328 the chain is on the cytoplasmic side; sequence MTTPPHLSDR…TESDGSIGRW (328 aa). Residues 11-273 enclose the Protein kinase domain; it reads YELGDILGFG…TAAEMRADLI (263 aa). ATP is bound by residues 17–25, Lys40, and 93–95; these read LGFGGMSEV and EYV. Catalysis depends on Asp138, which acts as the Proton acceptor. Residues 140-143 and Asp156 contribute to the ATP site; that span reads KPAN. Mg(2+) contacts are provided by Asn143 and Asp156. Phosphoserine; by autocatalysis is present on residues Ser166 and Ser168. Phosphothreonine; by autocatalysis is present on residues Thr170, Thr172, and Thr308. Residues 329 to 349 form a helical membrane-spanning segment; that stretch reads VAVVAVLAVLTIAIVAAFNTF. The Extracellular portion of the chain corresponds to 350–622; that stretch reads GGNTRDVQVP…DGIITLKFGQ (273 aa). 4 PASTA domains span residues 352 to 418, 419 to 486, 487 to 553, and 554 to 622; these read NTRD…NVST, GPEQ…IVGS, GPET…QVSK, and GNQF…KFGQ. The segment at 381 to 404 is disordered; sequence RTLQKPDSTIPPDHVISTEPGANA.

This sequence belongs to the protein kinase superfamily. Ser/Thr protein kinase family. As to quaternary structure, homodimer. Autophosphorylated. Dephosphorylated by PstP.

Its subcellular location is the cell membrane. It catalyses the reaction L-seryl-[protein] + ATP = O-phospho-L-seryl-[protein] + ADP + H(+). The catalysed reaction is L-threonyl-[protein] + ATP = O-phospho-L-threonyl-[protein] + ADP + H(+). Protein kinase that regulates many aspects of mycobacterial physiology. Is a key component of a signal transduction pathway that regulates cell growth, cell shape and cell division via phosphorylation of target proteins. The polypeptide is Serine/threonine-protein kinase PknB (pknB) (Mycobacterium leprae (strain TN)).